Reading from the N-terminus, the 101-residue chain is Small ribosomal subunit protein uS14 (101 aa).

The interval 1–20 is disordered; the sequence is MAKISAVERNKKRERLTKRD.

Belongs to the universal ribosomal protein uS14 family. As to quaternary structure, part of the 30S ribosomal subunit. Contacts proteins S3 and S10.

In terms of biological role, binds 16S rRNA, required for the assembly of 30S particles and may also be responsible for determining the conformation of the 16S rRNA at the A site. This chain is Small ribosomal subunit protein uS14, found in Rhodospirillum rubrum (strain ATCC 11170 / ATH 1.1.1 / DSM 467 / LMG 4362 / NCIMB 8255 / S1).